Reading from the N-terminus, the 96-residue chain is Large ribosomal subunit protein bL27 (96 aa).

Residues 1–11 constitute a propeptide that is removed on maturation; it reads MLKTLENLQLF. Positions 13–36 are disordered; sequence HKKGGGSTSNGRDSQAKRLGAKAA.

The protein belongs to the bacterial ribosomal protein bL27 family. In terms of processing, the N-terminus is cleaved by ribosomal processing cysteine protease Prp.

This chain is Large ribosomal subunit protein bL27, found in Streptococcus thermophilus (strain CNRZ 1066).